We begin with the raw amino-acid sequence, 295 residues long: Glutamyl-Q tRNA(Asp) synthetase (295 aa).

L-glutamate is bound by residues 5–9 (RFAPS) and glutamate 41. Residues 8-18 (PSPTGLLHIGS) carry the 'HIGH' region motif. 4 residues coordinate Zn(2+): cysteine 97, cysteine 99, tyrosine 117, and cysteine 121. Positions 178 and 196 each coordinate L-glutamate. Residues 234-238 (KWSKQ) carry the 'KMSKS' region motif. Residue lysine 237 coordinates ATP.

This sequence belongs to the class-I aminoacyl-tRNA synthetase family. GluQ subfamily. Requires Zn(2+) as cofactor.

In terms of biological role, catalyzes the tRNA-independent activation of glutamate in presence of ATP and the subsequent transfer of glutamate onto a tRNA(Asp). Glutamate is transferred on the 2-amino-5-(4,5-dihydroxy-2-cyclopenten-1-yl) moiety of the queuosine in the wobble position of the QUC anticodon. The polypeptide is Glutamyl-Q tRNA(Asp) synthetase (Neisseria gonorrhoeae (strain ATCC 700825 / FA 1090)).